Here is a 243-residue protein sequence, read N- to C-terminus: Uridylate kinase (243 aa).

15–18 is an ATP binding site; sequence KISG. Gly57 is a UMP binding site. Positions 58 and 62 each coordinate ATP. Residues Asp77 and 138–145 contribute to the UMP site; that span reads TGNPFFTT. Positions 165, 171, and 174 each coordinate ATP.

This sequence belongs to the UMP kinase family. In terms of assembly, homohexamer.

It localises to the cytoplasm. It catalyses the reaction UMP + ATP = UDP + ADP. It participates in pyrimidine metabolism; CTP biosynthesis via de novo pathway; UDP from UMP (UMPK route): step 1/1. Its activity is regulated as follows. Inhibited by UTP. Catalyzes the reversible phosphorylation of UMP to UDP. The chain is Uridylate kinase from Blochmanniella floridana.